Reading from the N-terminus, the 299-residue chain is MLKSSKKEDSSKKNQNNKLIFTVRKLFSPIKNFFRKTKTPDNFFGVIKRLKINSQKMTLDERNILANLLELEDKTIEDIMVPRSDIAAIKLTTNLEELSESIKLEVPHTRTLIYDGTLDNVVGFIHIKDLFKALATKQNGRLKKLIRKHIIAAPSMKLLDLLAKMRRERTHIAIVVDEYGGTDGLVTIEDLIEEIVGRIDDEHDQQLDSDNFKVINNSTIISNARVEVEVLEEIIGEKLHNDYDEFDTIGGLVLTRVSSVPAIGTRIDISENIEIEVTDATPRSLKQVKIRLKNGLNGQ.

2 consecutive CBS domains span residues 80-142 (MVPR…NGRL) and 145-202 (LIRK…IDDE).

Belongs to the UPF0053 family. Hemolysin C subfamily.

The sequence is that of Hemolysin C homolog (tlyC) from Rickettsia rickettsii (strain Sheila Smith).